The chain runs to 393 residues: Probable acetyl-CoA acetyltransferase (393 aa).

Cys-88 (acyl-thioester intermediate) is an active-site residue. Catalysis depends on proton acceptor residues His-348 and Cys-378.

The protein belongs to the thiolase-like superfamily. Thiolase family.

The protein resides in the cytoplasm. The catalysed reaction is 2 acetyl-CoA = acetoacetyl-CoA + CoA. The sequence is that of Probable acetyl-CoA acetyltransferase (yqeF) from Escherichia coli (strain K12).